We begin with the raw amino-acid sequence, 211 residues long: Thymidylate kinase (211 aa).

10–17 (GVEGCGKT) is a binding site for ATP.

It belongs to the thymidylate kinase family.

The enzyme catalyses dTMP + ATP = dTDP + ADP. Functionally, phosphorylation of dTMP to form dTDP in both de novo and salvage pathways of dTTP synthesis. This Nostoc punctiforme (strain ATCC 29133 / PCC 73102) protein is Thymidylate kinase.